Here is a 785-residue protein sequence, read N- to C-terminus: Mitochondrial intermediate peptidase (785 aa).

The N-terminal 26 residues, 1-26 (MLKVTTSRPWVCSRCVRRQVQSRRRL), are a transit peptide targeting the mitochondrion. The interval 26–51 (LATASTQYRESRPVPVDNSAPGAKRD) is disordered. His566 contacts Zn(2+). Residue Glu567 is part of the active site. Zn(2+) contacts are provided by His570 and His573.

Belongs to the peptidase M3 family. Requires Zn(2+) as cofactor.

Its subcellular location is the mitochondrion matrix. The catalysed reaction is Release of an N-terminal octapeptide as second stage of processing of some proteins imported into the mitochondrion.. Functionally, cleaves proteins, imported into the mitochondrion, to their mature size. While most mitochondrial precursor proteins are processed to the mature form in one step by mitochondrial processing peptidase (MPP), the sequential cleavage by MIP of an octapeptide after initial processing by MPP is a required step for a subgroup of nuclear-encoded precursor proteins destined for the matrix or the inner membrane. The chain is Mitochondrial intermediate peptidase (oct1) from Botryotinia fuckeliana (strain B05.10) (Noble rot fungus).